Consider the following 266-residue polypeptide: 3-deoxy-manno-octulosonate cytidylyltransferase (266 aa).

Belongs to the KdsB family.

It localises to the cytoplasm. The catalysed reaction is 3-deoxy-alpha-D-manno-oct-2-ulosonate + CTP = CMP-3-deoxy-beta-D-manno-octulosonate + diphosphate. The protein operates within nucleotide-sugar biosynthesis; CMP-3-deoxy-D-manno-octulosonate biosynthesis; CMP-3-deoxy-D-manno-octulosonate from 3-deoxy-D-manno-octulosonate and CTP: step 1/1. It participates in bacterial outer membrane biogenesis; lipopolysaccharide biosynthesis. Its function is as follows. Activates KDO (a required 8-carbon sugar) for incorporation into bacterial lipopolysaccharide in Gram-negative bacteria. The sequence is that of 3-deoxy-manno-octulosonate cytidylyltransferase from Paraburkholderia xenovorans (strain LB400).